Here is a 284-residue protein sequence, read N- to C-terminus: Tropomyosin alpha-1 chain (284 aa).

The disordered stretch occupies residues 1 to 38 (MDAIKKKMQMLKLDKENALDRAEQAEADKKAAEERSKQ). Residues 1 to 284 (MDAIKKKMQM…DHALNDMTSI (284 aa)) are a coiled coil. Positions 12–38 (KLDKENALDRAEQAEADKKAAEERSKQ) are enriched in basic and acidic residues.

It belongs to the tropomyosin family. As to quaternary structure, homodimer. Heterodimer of an alpha (TPM1, TPM3 or TPM4) and a beta (TPM2) chain. Interacts with HRG (via the HRR domain); the interaction contributes to the antiangiogenic properties of the histidine/proline-rich region (HRR) of HRG.

It localises to the cytoplasm. Its subcellular location is the cytoskeleton. Its function is as follows. Binds to actin filaments in muscle and non-muscle cells. Plays a central role, in association with the troponin complex, in the calcium dependent regulation of vertebrate striated muscle contraction. Smooth muscle contraction is regulated by interaction with caldesmon. In non-muscle cells is implicated in stabilizing cytoskeleton actin filaments. This Coturnix japonica (Japanese quail) protein is Tropomyosin alpha-1 chain (TPM1).